We begin with the raw amino-acid sequence, 247 residues long: MASLSRPSLPSCLCSFLLLLLLQVSSSYAGQFRVIGPRHPIRALVGDEVELPCRISPGKNATGMEVGWYRPPFSRVVHLYRNGKDQDGDQAPEYRGRTELLKDAIGEGKVTLRIRNVRFSDEGGFTCFFRDHSYQEEAAMELKVEDPFYWVSPGVLVLLAVLPVLLLQITVGLIFLCLQYRLRGKLRAEIENLHRTFDPHFLRVPCWKITLFVIVPVLGPLVALIICYNWLHRRLAGQFLEELRNPF.

Positions 1–29 (MASLSRPSLPSCLCSFLLLLLLQVSSSYA) are cleaved as a signal peptide. Topologically, residues 30–154 (GQFRVIGPRH…EDPFYWVSPG (125 aa)) are extracellular. Residues 32-145 (FRVIGPRHPI…EEAAMELKVE (114 aa)) form the Ig-like V-type domain. Cys-53 and Cys-127 are joined by a disulfide. Asn-60 carries N-linked (GlcNAc...) asparagine glycosylation. Residues 155-175 (VLVLLAVLPVLLLQITVGLIF) traverse the membrane as a helical segment. The Cytoplasmic portion of the chain corresponds to 176-210 (LCLQYRLRGKLRAEIENLHRTFDPHFLRVPCWKIT). Residues 211–231 (LFVIVPVLGPLVALIICYNWL) traverse the membrane as a helical segment. The Extracellular segment spans residues 232-247 (HRRLAGQFLEELRNPF).

It belongs to the immunoglobulin superfamily. BTN/MOG family. Homodimer. May form heterodimers between the different isoforms. As to quaternary structure, (Microbial infection) Interacts with rubella virus E2 glycoprotein. In terms of tissue distribution, found exclusively in the CNS, where it is localized on the surface of myelin and oligodendrocyte cytoplasmic membranes.

It localises to the cell membrane. Functionally, mediates homophilic cell-cell adhesion. Minor component of the myelin sheath. May be involved in completion and/or maintenance of the myelin sheath and in cell-cell communication. (Microbial infection) Acts as a receptor for rubella virus. The polypeptide is Myelin-oligodendrocyte glycoprotein (MOG) (Homo sapiens (Human)).